The following is a 147-amino-acid chain: Cystatin-9-like (147 aa).

An N-terminal signal peptide occupies residues Met-1–Ala-28. Cys-98 and Cys-108 are oxidised to a cystine. 2 N-linked (GlcNAc...) asparagine glycosylation sites follow: Asn-117 and Asn-139. An intrachain disulfide couples Cys-122 to Cys-142.

It belongs to the cystatin family. As to expression, specifically expressed in testis.

The protein resides in the secreted. The protein is Cystatin-9-like (CST9L) of Homo sapiens (Human).